A 437-amino-acid chain; its full sequence is MAAGTLYTYPENWRAFKALIAAQYSGAQVRVLSAPPHFHFGQTNRTPEFLRKFPAGKVPAFEGDDGFCVFESNAIAYYVSNEELRGSTPEAAAQVVQWVSFADSDIVPPASTWVFPTLGIMHHNKQATENAKEEVRRILGLLDAHLKTRTFLVGERVTLADITVVCTLLWLYKQVLEPSFRQAFPNTNRWFLTCINQPQFRAVLGEVKLCEKMAQFDAKKFAESQPKKDTPRKEKGSREEKQKPQAERKEEKKAAAPAPEEEMDECEQALAAEPKAKDPFAHLPKSTFVLDEFKRKYSNEDTLSVALPYFWEHFDKDGWSLWYSEYRFPEELTQTFMSCNLITGMFQRLDKLRKNAFASVILFGTNNSSSISGVWVFRGQELAFPLSPDWQVDYESYTWRKLDPGSEEAQTLVREYFSWEGAFQHVGKAFNQGKIFK.

Residue A2 is modified to N-acetylalanine. The 86-residue stretch at 2-87 (AAGTLYTYPE…YVSNEELRGS (86 aa)) folds into the GST N-terminal domain. Residues 88-216 (TPEAAAQVVQ…VKLCEKMAQF (129 aa)) form the GST C-terminal domain. Residues K147 and K212 each carry the N6-acetyllysine modification. Residues 221–254 (FAESQPKKDTPRKEKGSREEKQKPQAERKEEKKA) are compositionally biased toward basic and acidic residues. A disordered region spans residues 221 to 268 (FAESQPKKDTPRKEKGSREEKQKPQAERKEEKKAAAPAPEEEMDECEQ). Residue K253 forms a Glycyl lysine isopeptide (Lys-Gly) (interchain with G-Cter in SUMO1) linkage. The region spanning 276-437 (AKDPFAHLPK…KAFNQGKIFK (162 aa)) is the EF-1-gamma C-terminal domain. A Glycyl lysine isopeptide (Lys-Gly) (interchain with G-Cter in SUMO2) cross-link involves residue K285. The residue at position 401 (K401) is an N6-acetyllysine. An N6-acetyllysine; alternate modification is found at K434. K434 is modified (N6-malonyllysine; alternate).

As to quaternary structure, EF-1 is composed of four subunits: alpha, beta, delta, and gamma.

In terms of biological role, probably plays a role in anchoring the complex to other cellular components. This chain is Elongation factor 1-gamma (EEF1G), found in Equus caballus (Horse).